The following is a 511-amino-acid chain: MITTVIIAIVCFAVGGGLSYMLFRYGLKSKYDIIIKEAQTEAEVIKKNKLLEVKEKFLNKKADLEKEVALRNQKIQQAENKLKQRELMLNQKQEEVQRKRTEAEAIKENLEAQIVIIDKKKDELDKLQMQEREKLEALSGLSAEEAKERLIESLKEEAKTQAASYINDIMDDAKLTANKEAKRIVIQSIQRVATETAIENSVTVFHIESDEIKGRIIGREGRNIRALEAATGVEIVVDDTPEAIVLSAFDPVRREIARLALHQLVTDGRIHPARIEEVVAKVRKQVEEEIIETGKRTTIDLGIHGLHPELIRIIGKMKYRSSYGQNLLQHARETANLCAVMASELGLNPKKAKRAGLLHDIGKVPDEEPELPHALLGMKIAEKYKEKPDICNAIGAHHDETEMTSLLAPIVQVCDAISGARPGARREIVEAYIKRLNDLEQLAMSYPGVTKTYAIQAGRELRVIVGADKIDDKQTESLSGEIAKKIQDEMTYPGQVKITVIRETRAVSFAK.

A helical membrane pass occupies residues 2–22; it reads ITTVIIAIVCFAVGGGLSYML. The KH domain occupies 201 to 261; it reads SVTVFHIESD…VRREIARLAL (61 aa). One can recognise an HD domain in the interval 327 to 420; that stretch reads LLQHARETAN…VQVCDAISGA (94 aa).

Belongs to the RNase Y family.

The protein resides in the cell membrane. Its function is as follows. Endoribonuclease that initiates mRNA decay. The sequence is that of Ribonuclease Y from Phocaeicola vulgatus (strain ATCC 8482 / DSM 1447 / JCM 5826 / CCUG 4940 / NBRC 14291 / NCTC 11154) (Bacteroides vulgatus).